We begin with the raw amino-acid sequence, 275 residues long: Ciliary microtubule inner protein 2B (275 aa).

2 disordered regions span residues proline 62 to glutamate 84 and glutamate 125 to serine 169. Composition is skewed to basic and acidic residues over residues glutamate 71–glutamate 84 and glutamate 125–valine 147.

It belongs to the CIMIP2 family. As to quaternary structure, microtubule inner protein component of sperm flagellar doublet microtubules. In terms of tissue distribution, expressed in airway epithelial cells.

It localises to the cytoplasm. The protein resides in the cytoskeleton. It is found in the cilium axoneme. Its subcellular location is the flagellum axoneme. Microtubule inner protein (MIP) part of the dynein-decorated doublet microtubules (DMTs) in cilia axoneme, which is required for motile cilia beating. The chain is Ciliary microtubule inner protein 2B from Homo sapiens (Human).